The chain runs to 342 residues: Biotin synthase (342 aa).

Positions 55–274 (NAVQCNQLLN…IALARIMMPK (220 aa)) constitute a Radical SAM core domain. Residues cysteine 70, cysteine 74, and cysteine 77 each coordinate [4Fe-4S] cluster. [2Fe-2S] cluster contacts are provided by cysteine 114, cysteine 145, cysteine 205, and arginine 278.

This sequence belongs to the radical SAM superfamily. Biotin synthase family. In terms of assembly, homodimer. [4Fe-4S] cluster is required as a cofactor. It depends on [2Fe-2S] cluster as a cofactor.

The enzyme catalyses (4R,5S)-dethiobiotin + (sulfur carrier)-SH + 2 reduced [2Fe-2S]-[ferredoxin] + 2 S-adenosyl-L-methionine = (sulfur carrier)-H + biotin + 2 5'-deoxyadenosine + 2 L-methionine + 2 oxidized [2Fe-2S]-[ferredoxin]. It functions in the pathway cofactor biosynthesis; biotin biosynthesis; biotin from 7,8-diaminononanoate: step 2/2. Its function is as follows. Catalyzes the conversion of dethiobiotin (DTB) to biotin by the insertion of a sulfur atom into dethiobiotin via a radical-based mechanism. The chain is Biotin synthase from Rhodopseudomonas palustris (strain BisB5).